A 468-amino-acid chain; its full sequence is MTKTLPKDFIFGGATAAYQAEGATHTDGKGPVAWDKYLEDNYWYTAEPASDFYNRYPVDLKLSEEFGVNGIRISIAWSRIFPTGKGEVNPKGVEYYHNLFAECHKRHVEPFVTLHHFDTPEALHSDGDFLNRENIEHFVNYAEFCFKEFSEVNYWTTFNEIGPIGDGQYLVGKFPPGIQYDLAKVFQSHHNMMVSHARAVKLFKDSGYSGEIGVVHALPTKYPFDANNPDDVRAAELEDIIHNKFILDATYLGKYSDKTMEGVNHILEVNGGELDLREEDFAALDAAKDLNDFLGINYYMSDWMQAFDGETEIIHNGKGEKGSSKYQIKGVGRRKAPVDVPKTDWDWIIFPQGLYDQIMRVKADYPNYKKIYITENGLGYKDEFVDNTVYDDGRIDYVKKHLEVISDAISDGANVKGYFMWSLMDVFSWSNGYEKRYGLFYVDFETQERYPKKSAYWYKKVAETQVIE.

Gln-19, His-116, Asn-159, Glu-160, and Asn-297 together coordinate D-galactose 6-phosphate. Glu-160 acts as the Proton donor in catalysis. Glu-375 acts as the Nucleophile in catalysis. 4 residues coordinate D-galactose 6-phosphate: Ser-428, Trp-429, Lys-435, and Tyr-437.

Belongs to the glycosyl hydrolase 1 family.

It catalyses the reaction a 6-phospho-beta-D-galactoside + H2O = D-galactose 6-phosphate + an alcohol. It participates in carbohydrate metabolism; lactose degradation; D-galactose 6-phosphate and beta-D-glucose from lactose 6-phosphate: step 1/1. In Streptococcus pyogenes serotype M28 (strain MGAS6180), this protein is 6-phospho-beta-galactosidase.